The sequence spans 287 residues: MKVQYECLTCMANQCQRIVEMATQDMDIRRRAMILAAKLLAKEYNENAIPAIAGSLIFLELYKFLGNDDPFIEYKLKSEEMARKVADIIKRKLKLDFELAVKLAIIGNVIDFSVGFSPEDLEEEVEKMLKDKLYIDDSKELFEEVKRAENILYITDNVGEHYFDAILIEKIREISNAEVYIAGKEGPIINDATVEDLKRAGLEKLGKVISTGTRIVGVPLKLVSREFMEAFNKADVIIAKGQGNFETLSEINDSRIFFLLKAKCPAVARELKVPKGALVCMRNKFKL.

The short motif at 7 to 10 (CLTC) is the Subfamily I CxxC motif element. Mn(2+)-binding residues include Asp-156, Asn-157, and Asp-191. Residues 243–246 (GNFE) carry the Subfamily I GNFE motif motif. Positions 263–264 (KC) match the Subfamily I KC motif motif.

It belongs to the damage-control phosphatase family. Nucleotides phosphatase I subfamily. Mn(2+) is required as a cofactor. Ni(2+) serves as cofactor. Requires [2Fe-2S] cluster as cofactor.

Activity is strongly promoted by Co(2+), Ni(2+), Mg(2+), Mn(2+), Ca(2+), Zn(2+) and Cu(2+). Activity is inhibited by EDTA. Metal-dependent phosphatase with probable damage-control functions. Shows phosphatase activity against p-nitrophenyl phosphate (pNPP), but natural substrates have not been identified yet. Low phosphatase activity against 8-oxo nucleotides suggests that it could hydrolyze oxidatively damaged purine nucleotides or their biosynthetic intermediates. The protein is Damage-control phosphatase PH1575 of Pyrococcus horikoshii (strain ATCC 700860 / DSM 12428 / JCM 9974 / NBRC 100139 / OT-3).